The chain runs to 84 residues: MERNLRKKRLGRVVSDKMDKTIVVAVETKVRHPLYGKTVNRTTKFKAHDENNEARFGDRVLIMETRPLSKDKRWRLVEIVEKAK.

Belongs to the universal ribosomal protein uS17 family. Part of the 30S ribosomal subunit.

Its function is as follows. One of the primary rRNA binding proteins, it binds specifically to the 5'-end of 16S ribosomal RNA. The protein is Small ribosomal subunit protein uS17 of Clostridium perfringens (strain ATCC 13124 / DSM 756 / JCM 1290 / NCIMB 6125 / NCTC 8237 / Type A).